The sequence spans 225 residues: Protein-L-isoaspartate O-methyltransferase 2 (225 aa).

Ser-73 is an active-site residue.

It belongs to the methyltransferase superfamily. L-isoaspartyl/D-aspartyl protein methyltransferase family.

Its subcellular location is the cytoplasm. The catalysed reaction is [protein]-L-isoaspartate + S-adenosyl-L-methionine = [protein]-L-isoaspartate alpha-methyl ester + S-adenosyl-L-homocysteine. In terms of biological role, catalyzes the methyl esterification of L-isoaspartyl residues in peptides and proteins that result from spontaneous decomposition of normal L-aspartyl and L-asparaginyl residues. It plays a role in the repair and/or degradation of damaged proteins. The polypeptide is Protein-L-isoaspartate O-methyltransferase 2 (Pelobacter propionicus (strain DSM 2379 / NBRC 103807 / OttBd1)).